We begin with the raw amino-acid sequence, 240 residues long: MKGTGGVVVGTQNPVRDYNHSTDEEYQRLRRLADEAYKKRDQLSHESQTAYQQGDKKLAHELSEKSKAQLKTAEDFNMQAAEYVFVENNADSSSNEIDLHGLYVKEALFILQKRIKFAIDHNEPQLNVIVGKGLHSQNGIAKLKPSIEEFCAKHGIRNHLEKGNSGVLVLELQGVQMQMDGPAVNAPTNQYNAQPHPQYNNNGGQPQGQAQNYNNSGNDNKDSTLTSIFKIFCNCIQSLA.

The tract at residues 1–24 (MKGTGGVVVGTQNPVRDYNHSTDE) is disordered. The Smr domain maps to 97-173 (IDLHGLYVKE…NSGVLVLELQ (77 aa)). The disordered stretch occupies residues 181–219 (GPAVNAPTNQYNAQPHPQYNNNGGQPQGQAQNYNNSGND). Positions 194–215 (QPHPQYNNNGGQPQGQAQNYNN) are enriched in low complexity.

The protein localises to the cytoplasm. Its function is as follows. Endonuclease involved in nonstop mRNA decay via the formation of mRNA cleavage fragments in the vicinity of stalled ribosomes. The chain is Endonuclease NBR9 from Saccharomyces cerevisiae (strain ATCC 204508 / S288c) (Baker's yeast).